A 199-amino-acid chain; its full sequence is Protein C (199 aa).

Composition is skewed to polar residues over residues 19–34 (QLIS…SYSA) and 43–57 (KTTQ…SAPP). The segment at 19–67 (QLISPRPSTSLNSYSAPTPKKTYRKTTQSTQEPSNSAPPSVNQKSNQQK) is disordered. Residues 58-67 (SVNQKSNQQK) are compositionally biased toward low complexity.

The protein belongs to the respirovirus protein C family.

The sequence is that of Protein C (P/V/C) from Human parainfluenza 3 virus (strain Wash/47885/57) (HPIV-3).